The following is a 374-amino-acid chain: Eukaryotic translation initiation factor 3 subunit M (374 aa).

Ser2 bears the N-acetylserine mark. Ser2 and Ser152 each carry phosphoserine. A PCI domain is found at Ala180 to His339. Lys254 carries the N6-acetyllysine modification. At Ser367 the chain carries Phosphoserine.

This sequence belongs to the eIF-3 subunit M family. As to quaternary structure, component of the eukaryotic translation initiation factor 3 (eIF-3) complex, which is composed of 13 subunits: EIF3A, EIF3B, EIF3C, EIF3D, EIF3E, EIF3F, EIF3G, EIF3H, EIF3I, EIF3J, EIF3K, EIF3L and EIF3M. The eIF-3 complex appears to include 3 stable modules: module A is composed of EIF3A, EIF3B, EIF3G and EIF3I; module B is composed of EIF3F, EIF3H, and EIF3M; and module C is composed of EIF3C, EIF3D, EIF3E, EIF3K and EIF3L. EIF3C of module C binds EIF3B of module A and EIF3H of module B, thereby linking the three modules. EIF3J is a labile subunit that binds to the eIF-3 complex via EIF3B. The eIF-3 complex interacts with RPS6KB1 under conditions of nutrient depletion. Mitogenic stimulation leads to binding and activation of a complex composed of MTOR and RPTOR, leading to phosphorylation and release of RPS6KB1 and binding of EIF4B to eIF-3.

The protein localises to the cytoplasm. Functionally, component of the eukaryotic translation initiation factor 3 (eIF-3) complex, which is required for several steps in the initiation of protein synthesis. The eIF-3 complex associates with the 40S ribosome and facilitates the recruitment of eIF-1, eIF-1A, eIF-2:GTP:methionyl-tRNAi and eIF-5 to form the 43S pre-initiation complex (43S PIC). The eIF-3 complex stimulates mRNA recruitment to the 43S PIC and scanning of the mRNA for AUG recognition. The eIF-3 complex is also required for disassembly and recycling of post-termination ribosomal complexes and subsequently prevents premature joining of the 40S and 60S ribosomal subunits prior to initiation. The eIF-3 complex specifically targets and initiates translation of a subset of mRNAs involved in cell proliferation, including cell cycling, differentiation and apoptosis, and uses different modes of RNA stem-loop binding to exert either translational activation or repression. The polypeptide is Eukaryotic translation initiation factor 3 subunit M (Pongo abelii (Sumatran orangutan)).